The chain runs to 1342 residues: DNA-directed RNA polymerase subunit beta (1342 aa).

Belongs to the RNA polymerase beta chain family. In terms of assembly, the RNAP catalytic core consists of 2 alpha, 1 beta, 1 beta' and 1 omega subunit. When a sigma factor is associated with the core the holoenzyme is formed, which can initiate transcription.

It carries out the reaction RNA(n) + a ribonucleoside 5'-triphosphate = RNA(n+1) + diphosphate. Functionally, DNA-dependent RNA polymerase catalyzes the transcription of DNA into RNA using the four ribonucleoside triphosphates as substrates. The polypeptide is DNA-directed RNA polymerase subunit beta (Colwellia psychrerythraea (strain 34H / ATCC BAA-681) (Vibrio psychroerythus)).